The primary structure comprises 194 residues: Protein GrpE (194 aa).

Belongs to the GrpE family. In terms of assembly, homodimer.

It localises to the cytoplasm. Participates actively in the response to hyperosmotic and heat shock by preventing the aggregation of stress-denatured proteins, in association with DnaK and GrpE. It is the nucleotide exchange factor for DnaK and may function as a thermosensor. Unfolded proteins bind initially to DnaJ; upon interaction with the DnaJ-bound protein, DnaK hydrolyzes its bound ATP, resulting in the formation of a stable complex. GrpE releases ADP from DnaK; ATP binding to DnaK triggers the release of the substrate protein, thus completing the reaction cycle. Several rounds of ATP-dependent interactions between DnaJ, DnaK and GrpE are required for fully efficient folding. This chain is Protein GrpE, found in Aliivibrio salmonicida (strain LFI1238) (Vibrio salmonicida (strain LFI1238)).